The primary structure comprises 643 residues: tRNA 5-methylaminomethyl-2-thiouridine biosynthesis bifunctional protein MnmC (643 aa).

Positions 1–223 (MPDRLVSATL…VDDRLVGDYA (223 aa)) are tRNA (mnm(5)s(2)U34)-methyltransferase. The segment at 247–643 (IGAGLAGCAV…LRARRVGSAG (397 aa)) is FAD-dependent cmnm(5)s(2)U34 oxidoreductase.

In the N-terminal section; belongs to the methyltransferase superfamily. tRNA (mnm(5)s(2)U34)-methyltransferase family. The protein in the C-terminal section; belongs to the DAO family. Requires FAD as cofactor.

Its subcellular location is the cytoplasm. It catalyses the reaction 5-aminomethyl-2-thiouridine(34) in tRNA + S-adenosyl-L-methionine = 5-methylaminomethyl-2-thiouridine(34) in tRNA + S-adenosyl-L-homocysteine + H(+). Functionally, catalyzes the last two steps in the biosynthesis of 5-methylaminomethyl-2-thiouridine (mnm(5)s(2)U) at the wobble position (U34) in tRNA. Catalyzes the FAD-dependent demodification of cmnm(5)s(2)U34 to nm(5)s(2)U34, followed by the transfer of a methyl group from S-adenosyl-L-methionine to nm(5)s(2)U34, to form mnm(5)s(2)U34. The polypeptide is tRNA 5-methylaminomethyl-2-thiouridine biosynthesis bifunctional protein MnmC (Burkholderia orbicola (strain MC0-3)).